The sequence spans 329 residues: Signal recognition particle receptor FtsY (329 aa).

Residues 127-134, 209-213, and 273-276 each bind GTP; these read GVNGVGKT, DTAGR, and TKLD.

It belongs to the GTP-binding SRP family. FtsY subfamily. Part of the signal recognition particle protein translocation system, which is composed of SRP and FtsY.

The protein localises to the cell membrane. It localises to the cytoplasm. The enzyme catalyses GTP + H2O = GDP + phosphate + H(+). In terms of biological role, involved in targeting and insertion of nascent membrane proteins into the cytoplasmic membrane. Acts as a receptor for the complex formed by the signal recognition particle (SRP) and the ribosome-nascent chain (RNC). The protein is Signal recognition particle receptor FtsY of Bacillus subtilis (strain 168).